A 279-amino-acid polypeptide reads, in one-letter code: Putative hydro-lyase GDI0188/Gdia_2258 (279 aa).

It belongs to the D-glutamate cyclase family.

In Gluconacetobacter diazotrophicus (strain ATCC 49037 / DSM 5601 / CCUG 37298 / CIP 103539 / LMG 7603 / PAl5), this protein is Putative hydro-lyase GDI0188/Gdia_2258.